The following is a 233-amino-acid chain: MAEKATSLFLRAMEISEKQSFDVMRRNSSCTIRHLSSCGILETRRVSLPPPPSASSQMVPSRSFINLTAPLIMRRMEYSESRSINYSPEQMYDVVANVEQYQQFVPWCKKSKVTRGRNGDMRAQLEIGFPPIVERYTSEVTVIPNHQVRAVCTDGSLFNHLETLWRFTPGAAGQSCNVEFFVTFEFKSLLHSQLATMFFDEVVKQMVNAFETRAKKLYGTGVHRQQASLRRAI.

The N-terminal 34 residues, 1 to 34, are a transit peptide targeting the mitochondrion; sequence MAEKATSLFLRAMEISEKQSFDVMRRNSSCTIRH.

Belongs to the COQ10 family. Interacts with coenzyme Q.

The protein localises to the mitochondrion inner membrane. Required for the function of coenzyme Q in the respiratory chain. May serve as a chaperone or may be involved in the transport of Q6 from its site of synthesis to the catalytic sites of the respiratory complexes. This is Coenzyme Q-binding protein COQ10 homolog, mitochondrial from Danio rerio (Zebrafish).